The primary structure comprises 910 residues: ZZ-type zinc finger-containing protein 3 (910 aa).

Disordered regions lie at residues 41-117 and 133-153; these read AHPE…RQAE and EATN…PGEH. Residues 67–84 are compositionally biased toward polar residues; it reads QKGTNNGRTSDVRQQSAR. Residues Ser89, Ser96, Ser137, Ser138, and Ser142 each carry the phosphoserine modification. Basic and acidic residues predominate over residues 96–116; it reads SSSEKDDLERQALESCERRQA. The span at 142–153 shows a compositional bias: basic and acidic residues; sequence SPVKPDKEPGEH. Lys283 participates in a covalent cross-link: Glycyl lysine isopeptide (Lys-Gly) (interchain with G-Cter in SUMO2). Disordered regions lie at residues 303-358, 373-444, and 609-641; these read TAES…VSGE, TSLS…PQDG, and ARPK…SHNR. 2 stretches are compositionally biased toward polar residues: residues 331-347 and 397-434; these read SSAS…NPLD and SSPT…SESP. N6-acetyllysine is present on Lys401. A Phosphoserine modification is found at Ser613. A compositionally biased stretch (basic and acidic residues) spans 613–622; that stretch reads SPLDPKKDGE. Lys654 participates in a covalent cross-link: Glycyl lysine isopeptide (Lys-Gly) (interchain with G-Cter in SUMO2). Residues 654–714 enclose the HTH myb-type domain; it reads KPETFNQLWT…RVQKYFIKLT (61 aa). The segment at residues 687 to 710 is a DNA-binding region (H-T-H motif); that stretch reads WQKIADELGNRTAKQVASRVQKYF. At Lys708 the chain carries N6-acetyllysine. Lys715 is covalently cross-linked (Glycyl lysine isopeptide (Lys-Gly) (interchain with G-Cter in SUMO2)). The segment at 825–884 adopts a ZZ-type zinc-finger fold; that stretch reads HVGFKCDNCGVEPIQGVRWHCQDCPPEMSLDFCDSCSDCPHETDIHKEDHQLEPVYKSET. Residues Cys830, Cys833, Cys845, Cys848, Cys857, Cys860, His870, and His874 each coordinate Zn(2+).

As to quaternary structure, component of the ADA2A-containing complex (ATAC), composed of KAT14, KAT2A, TADA2L, TADA3L, ZZ3, MBIP, WDR5, YEATS2, CCDC101 and DR1. Interacts via (ZZ-type zinc finger) with histone H3 in a methylation-independent manner and acetylation on 'Lys-4' (H3K4ac) moderately enhances the interaction.

It is found in the nucleus. Functionally, histone H3 reader that is required for the ATAC complex-mediated maintenance of histone acetylation and gene activation. Component of the ATAC complex, a complex with histone acetyltransferase activity on histones H3 and H4. The polypeptide is ZZ-type zinc finger-containing protein 3 (Zzz3) (Mus musculus (Mouse)).